Reading from the N-terminus, the 342-residue chain is Ribosomal RNA small subunit methyltransferase C (342 aa).

Belongs to the methyltransferase superfamily. RsmC family. Monomer.

It localises to the cytoplasm. It catalyses the reaction guanosine(1207) in 16S rRNA + S-adenosyl-L-methionine = N(2)-methylguanosine(1207) in 16S rRNA + S-adenosyl-L-homocysteine + H(+). Functionally, specifically methylates the guanine in position 1207 of 16S rRNA in the 30S particle. In Salmonella enteritidis PT4 (strain P125109), this protein is Ribosomal RNA small subunit methyltransferase C.